Reading from the N-terminus, the 103-residue chain is Large ribosomal subunit protein bL21 (103 aa).

It belongs to the bacterial ribosomal protein bL21 family. In terms of assembly, part of the 50S ribosomal subunit. Contacts protein L20.

This protein binds to 23S rRNA in the presence of protein L20. This Thermobifida fusca (strain YX) protein is Large ribosomal subunit protein bL21.